A 973-amino-acid chain; its full sequence is ATP-dependent DNA helicase homolog RECG1, chloroplastic/mitochondrial (973 aa).

Positions 1-208 are sufficient for chloroplastic and mitochondrial trgeting; the sequence is MAAVTLSPCS…ATSEVEATSD (208 aa). The disordered stretch occupies residues 174 to 200; sequence LLQNDDSSDPREDILDDGSSFTSKTAT. Residues 536 to 725 enclose the Helicase ATP-binding domain; the sequence is DLKRPVPMNR…LYGDISLTQI (190 aa). ATP is bound at residue 549–556; that stretch reads GDVGCGKT. The DEQQ box motif lies at 655–658; the sequence is DEQQ. The Helicase C-terminal domain maps to 746-904; it reads GIKEVYSMML…GFYLANIDLL (159 aa).

This sequence belongs to the helicase family. RecG subfamily. Expressed in most tissues, not seen in pollen, ovules or developing seeds.

It localises to the plastid. The protein resides in the chloroplast. The protein localises to the mitochondrion. It catalyses the reaction Couples ATP hydrolysis with the unwinding of duplex DNA by translocating in the 3'-5' direction.. The enzyme catalyses ATP + H2O = ADP + phosphate + H(+). Its function is as follows. Plays a critical role in recombination and DNA repair. Helps process Holliday junction (HJ) intermediates to mature products by catalyzing branch migration. Has replication fork regression activity, unwinds stalled or blocked replication forks to make a HJ that can be resolved. Has a DNA unwinding activity characteristic of a DNA helicase with 3'-5' polarity. Functionally, plays a role in recombination surveillance and repair of double-stranded (ds)DNA breaks in the mitochondrion. May be able to dissociate D- and R-loops. Able to complement UV sensitivity of a recG deletion in E.coli. The polypeptide is ATP-dependent DNA helicase homolog RECG1, chloroplastic/mitochondrial (Arabidopsis thaliana (Mouse-ear cress)).